The following is a 376-amino-acid chain: Pyruvate dehydrogenase E1 component subunit beta-2, mitochondrial (376 aa).

A mitochondrion-targeting transit peptide spans 1 to 36 (MLGAARRQLGSGPMLGQVLRRLRPATAAAADAARAY). Residue Glu-99 participates in thiamine diphosphate binding. Ile-152, Ala-200, Ile-201, and Asp-203 together coordinate K(+).

In terms of assembly, tetramer of 2 alpha and 2 beta subunits. Requires thiamine diphosphate as cofactor.

It localises to the mitochondrion matrix. It catalyses the reaction N(6)-[(R)-lipoyl]-L-lysyl-[protein] + pyruvate + H(+) = N(6)-[(R)-S(8)-acetyldihydrolipoyl]-L-lysyl-[protein] + CO2. In terms of biological role, the pyruvate dehydrogenase complex catalyzes the overall conversion of pyruvate to acetyl-CoA and CO(2). It contains multiple copies of three enzymatic components: pyruvate dehydrogenase (E1), dihydrolipoamide acetyltransferase (E2) and lipoamide dehydrogenase (E3). The sequence is that of Pyruvate dehydrogenase E1 component subunit beta-2, mitochondrial from Oryza sativa subsp. japonica (Rice).